The sequence spans 423 residues: Serine--tRNA ligase (423 aa).

An L-serine-binding site is contributed by 231–233 (TGE). 262–264 (RSE) is an ATP binding site. E285 provides a ligand contact to L-serine. 349–352 (EISS) provides a ligand contact to ATP. S385 is a binding site for L-serine.

This sequence belongs to the class-II aminoacyl-tRNA synthetase family. Type-1 seryl-tRNA synthetase subfamily. As to quaternary structure, homodimer. The tRNA molecule binds across the dimer.

It localises to the cytoplasm. The enzyme catalyses tRNA(Ser) + L-serine + ATP = L-seryl-tRNA(Ser) + AMP + diphosphate + H(+). The catalysed reaction is tRNA(Sec) + L-serine + ATP = L-seryl-tRNA(Sec) + AMP + diphosphate + H(+). It participates in aminoacyl-tRNA biosynthesis; selenocysteinyl-tRNA(Sec) biosynthesis; L-seryl-tRNA(Sec) from L-serine and tRNA(Sec): step 1/1. Functionally, catalyzes the attachment of serine to tRNA(Ser). Is also able to aminoacylate tRNA(Sec) with serine, to form the misacylated tRNA L-seryl-tRNA(Sec), which will be further converted into selenocysteinyl-tRNA(Sec). This chain is Serine--tRNA ligase, found in Coxiella burnetii (strain RSA 331 / Henzerling II).